A 250-amino-acid polypeptide reads, in one-letter code: Sperm-egg fusion protein Juno (250 aa).

Residues 1 to 19 (MACWWPLLLELWTVMPTWA) form the signal peptide. 8 disulfide bridges follow: C27–C55, C47–C95, C56–C99, C79–C172, C86–C143, C132–C206, C136–C186, and C149–C166. Residues 62–81 (WEAHLDVSPLYNFSLFHCGL) are important for interaction with IZUMO1. N73 carries N-linked (GlcNAc...) asparagine glycosylation. Residue S228 is the site of GPI-anchor amidated serine attachment. A propeptide spanning residues 229–250 (SAPSWELSYTIMVCSLFLPFLS) is cleaved from the precursor.

This sequence belongs to the folate receptor family. Monomer. Interacts with IZUMO1; the interaction is direct. IZUMO1 and IZUMO1R/JUNO form a complex with 1:1 stoichiometry. Interacts with FCRL3/MAIA; FCRL3/MAIA replaces IZUMO1R/JUNO as IZUMO1 receptor after sperm-egg adhesion, thereby permitting species-specific gamete fusion. Interacts with WDR54. Post-translationally, the protein is rapidly cleaved following fertilization, being only weakly detectable in zona-intact fertilized eggs at telophase II and undetectable at the pronuclear stage. Sheding is probably required to block to polyspermy and ensuring egg fusion with a single sperm. Expressed in unfertilized oocytes (at protein level).

It localises to the cell membrane. The protein resides in the cell projection. It is found in the microvillus membrane. Functionally, receptor for IZUMO1 present at the cell surface of oocytes (oolemma), which is essential for species-specific gamete recognition and fertilization. The IZUMO1:IZUMO1R/JUNO interaction is a necessary adhesion event between sperm and egg that is required for fertilization but is not sufficient for cell fusion. The ligand-receptor interaction probably does not act as a membrane 'fusogen'. Does not bind folate. The polypeptide is Sperm-egg fusion protein Juno (Homo sapiens (Human)).